Here is a 71-residue protein sequence, read N- to C-terminus: Translational regulator CsrA (71 aa).

It belongs to the CsrA/RsmA family. Homodimer; the beta-strands of each monomer intercalate to form a hydrophobic core, while the alpha-helices form wings that extend away from the core.

The protein localises to the cytoplasm. Functionally, a translational regulator that binds mRNA to regulate translation initiation and/or mRNA stability. Usually binds in the 5'-UTR at or near the Shine-Dalgarno sequence preventing ribosome-binding, thus repressing translation. Its main target seems to be the major flagellin gene, while its function is anatagonized by FliW. The sequence is that of Translational regulator CsrA from Clostridium botulinum (strain Alaska E43 / Type E3).